A 208-amino-acid polypeptide reads, in one-letter code: Regulator of Ty1 transposition protein 105 (208 aa).

The interval 28-105 (GVSFDRSLTP…QRADQRSRLE (78 aa)) is disordered. Residues 33-42 (RSLTPQSLRT) show a composition bias toward polar residues. The span at 60–71 (IDTSPSVVSDII) shows a compositional bias: low complexity. Positions 94 to 105 (ERQRADQRSRLE) are enriched in basic and acidic residues.

The protein resides in the cytoplasm. It is found in the nucleus. Its function is as follows. Involved in regulation of Ty1 transposition. Inhibits Ty1 transposition at a post-transcriptional and pre-integrational stage of the Ty1 retrotransposition cycle. The protein is Regulator of Ty1 transposition protein 105 (RTT105) of Saccharomyces cerevisiae (strain YJM789) (Baker's yeast).